We begin with the raw amino-acid sequence, 243 residues long: UPF0173 metal-dependent hydrolase Xaut_3786 (243 aa).

This sequence belongs to the UPF0173 family.

The protein is UPF0173 metal-dependent hydrolase Xaut_3786 of Xanthobacter autotrophicus (strain ATCC BAA-1158 / Py2).